The following is a 716-amino-acid chain: tRNA(Met) cytidine acetyltransferase TmcA (716 aa).

ATP is bound by residues Gln-192, 217–226 (GRGKSYVIGL), and Arg-364. Positions 401–567 (REVLARDREV…KNVALAKPLD (167 aa)) constitute an N-acetyltransferase domain. Residues 493–495 (IAV) and 500–506 (QRRGLGS) each bind acetyl-CoA.

The protein belongs to the RNA cytidine acetyltransferase family. TmcA subfamily.

It is found in the cytoplasm. It carries out the reaction cytidine(34) in elongator tRNA(Met) + acetyl-CoA + ATP + H2O = N(4)-acetylcytidine(34) in elongator tRNA(Met) + ADP + phosphate + CoA + H(+). In terms of biological role, catalyzes the formation of N(4)-acetylcytidine (ac(4)C) at the wobble position of tRNA(Met), by using acetyl-CoA as an acetyl donor and ATP (or GTP). The polypeptide is tRNA(Met) cytidine acetyltransferase TmcA (Aeropyrum pernix (strain ATCC 700893 / DSM 11879 / JCM 9820 / NBRC 100138 / K1)).